Reading from the N-terminus, the 405-residue chain is Argininosuccinate synthase (405 aa).

ATP is bound by residues Ala10–Ser18 and Ala37. Residues Tyr88 and Ser93 each contribute to the L-citrulline site. Gly118 is an ATP binding site. 3 residues coordinate L-aspartate: Thr120, Asn124, and Asp125. Position 124 (Asn124) interacts with L-citrulline. Residues Arg128, Ser179, Ser188, Glu264, and Tyr276 each coordinate L-citrulline.

Belongs to the argininosuccinate synthase family. Type 1 subfamily. In terms of assembly, homotetramer.

It localises to the cytoplasm. It carries out the reaction L-citrulline + L-aspartate + ATP = 2-(N(omega)-L-arginino)succinate + AMP + diphosphate + H(+). Its pathway is amino-acid biosynthesis; L-arginine biosynthesis; L-arginine from L-ornithine and carbamoyl phosphate: step 2/3. The sequence is that of Argininosuccinate synthase from Pseudomonas fluorescens (strain ATCC BAA-477 / NRRL B-23932 / Pf-5).